The following is a 339-amino-acid chain: Glutamyl-tRNA reductase (339 aa).

Substrate contacts are provided by residues 50 to 53 (TCHR), Ser102, 107 to 109 (ETE), and Gln113. Catalysis depends on Cys51, which acts as the Nucleophile. 181 to 186 (GYSDIN) contributes to the NADP(+) binding site.

It belongs to the glutamyl-tRNA reductase family. Homodimer.

The enzyme catalyses (S)-4-amino-5-oxopentanoate + tRNA(Glu) + NADP(+) = L-glutamyl-tRNA(Glu) + NADPH + H(+). The protein operates within porphyrin-containing compound metabolism; protoporphyrin-IX biosynthesis; 5-aminolevulinate from L-glutamyl-tRNA(Glu): step 1/2. Catalyzes the NADPH-dependent reduction of glutamyl-tRNA(Glu) to glutamate 1-semialdehyde (GSA). In Chlamydia pneumoniae (Chlamydophila pneumoniae), this protein is Glutamyl-tRNA reductase.